We begin with the raw amino-acid sequence, 258 residues long: (S)-hydroxynitrile lyase (258 aa).

An AB hydrolase-1 domain is found at H5–K242. Residues T11 and S80 each coordinate 2-hydroxy-2-methylpropanenitrile. 3 residues coordinate acetone: T11, S80, and C81. S80 acts as the Proton donor/acceptor in catalysis. H236 serves as the catalytic Proton donor/acceptor.

The protein belongs to the AB hydrolase superfamily. Hydroxynitrile lyase family. In terms of assembly, homotetramer.

It catalyses the reaction a monosubstituted aliphatic (S)-hydroxynitrile = an aldehyde + hydrogen cyanide. The catalysed reaction is a disubstituted aliphatic (S)-hydroxynitrile = a ketone + hydrogen cyanide. It carries out the reaction an aromatic (S)-hydroxynitrile = an aromatic aldehyde + hydrogen cyanide. The enzyme catalyses 2-hydroxy-2-methylpropanenitrile = acetone + hydrogen cyanide. It catalyses the reaction butan-2-one + hydrogen cyanide = 2-hydroxy-2-methylbutanenitrile. The catalysed reaction is pentan-2-one + hydrogen cyanide = (2S)-2-hydroxy-2-methylpentanenitrile. It carries out the reaction hexan-2-one + hydrogen cyanide = (2S)-2-hydroxy-2-methylhexanenitrile. The enzyme catalyses heptan-2-one + hydrogen cyanide = (2S)-2-hydroxy-2-methylheptanenitrile. It catalyses the reaction 4-methylpentan-2-one + hydrogen cyanide = (2S)-2-hydroxy-2,4-dimethylpentanenitrile. The catalysed reaction is 3,3-dimethylbutan-2-one + hydrogen cyanide = (2S)-2-hydroxy-2-methyl-3,3-dimethylbutanenitrile. It carries out the reaction acetophenone + hydrogen cyanide = (2S)-2-hydroxy-2-phenylpropanenitrile. The enzyme catalyses propanal + hydrogen cyanide = (2S)-2-hydroxybutanenitrile. It catalyses the reaction pentanal + hydrogen cyanide = (2S)-2-hydroxyhexanenitrile. The catalysed reaction is 2-methylpropanal + hydrogen cyanide = (2S)-2-hydroxy-3-methylbutanenitrile. It carries out the reaction 2,2-dimethylpropanal + hydrogen cyanide = (2S)-2-hydroxy-3,3-dimethylbutanenitrile. The enzyme catalyses acrolein + hydrogen cyanide = (2S)-2-hydroxybut-3-enenitrile. It catalyses the reaction (2E)-but-2-enal + hydrogen cyanide = (2S,3E)-2-hydroxypent-3-enenitrile. The catalysed reaction is (E)-hex-2-enal + hydrogen cyanide = (2S,3E)-2-hydroxyhept-3-enenitrile. It carries out the reaction cyclohexanecarbaldehyde + hydrogen cyanide = (2S)-2-cyclohexyl-2-hydroxyacetonitrile. The enzyme catalyses benzaldehyde + hydrogen cyanide = (S)-mandelonitrile. It catalyses the reaction 4-methoxybenzaldehyde + hydrogen cyanide = (2S)-2-hydroxy-2-(4-methoxyphenyl)acetonitrile. The catalysed reaction is piperonal + hydrogen cyanide = (2S)-2-(2H-1,3-benzodioxol-5-yl)-2-hydroxyacetonitrile. It carries out the reaction formylthiophene + hydrogen cyanide = (2R)-2-hydroxy-2-(thiophen-2-yl)acetonitrile. The enzyme catalyses 3-formylthiophene + hydrogen cyanide = (2S)-2-hydroxy-2-(thiophen-3-yl)acetonitrile. It catalyses the reaction furan-3-carbaldehyde + hydrogen cyanide = (2S)-2-(furan-3-yl)-2-hydroxyacetonitrile. In terms of biological role, involved in cyanogenesis, the release of HCN from cyanogenic glycosides in injured tissues; the release of toxic HCN is believed to play a central role in the defense mechanism of plants against herbivores and microbial attack. Decomposes a variety of cyanohydrins (alpha-hydroxynitriles) into HCN and the corresponding aldehydes or ketones; two natural substrates are 2-hydroxy-2-methylpropanenitrile (acetone cyanohydrin) and 2-hydroxy-2-methylbutanenitrile (2-butanone cyanohydrin), but in vitro can also act on 2-hydroxy-2-methylpentanenitrile (2-pentanone cyanohydrin) and mandelonitrile. Is also able to catalyze the reverse reaction in vitro, leading to the stereospecific synthesis of aliphatic, aromatic, and heterocyclic cyanohydrins, important intermediates in the production of various agrochemicals or pharmaceuticals. In Manihot esculenta (Cassava), this protein is (S)-hydroxynitrile lyase.